A 2075-amino-acid polypeptide reads, in one-letter code: Autophagy-related protein 2 homolog B (2075 aa).

In terms of domain architecture, Chorein N-terminal spans 13-107 (ACRYLLQRYL…LEMVFRPRPR (95 aa)). Phosphoserine is present on residues Ser-255, Ser-379, Ser-496, Ser-839, Ser-885, Ser-898, and Ser-1007. At Tyr-1011 the chain carries Phosphotyrosine. 2 positions are modified to phosphoserine: Ser-1015 and Ser-1017. A Phosphothreonine modification is found at Thr-1021. The interval 1373 to 1403 (KAEMKPGVPQRKPKVDSSARSSSHGPVLPEA) is disordered. Position 1525 is a phosphoserine (Ser-1525). Disordered regions lie at residues 1570 to 1593 (TSPA…GRHT), 1759 to 1792 (EPNL…EDVS), and 2055 to 2075 (RNQI…HGED). The segment covering 1578-1587 (PHSSPSQTPT) has biased composition (polar residues). The span at 2058–2075 (IRPDVRQDESQKWRHGED) shows a compositional bias: basic and acidic residues.

Belongs to the ATG2 family. In terms of assembly, interacts with WDR45/WIPI4.

The protein localises to the preautophagosomal structure membrane. It is found in the lipid droplet. The protein resides in the endoplasmic reticulum membrane. The catalysed reaction is a 1,2-diacyl-sn-glycero-3-phospho-L-serine(in) = a 1,2-diacyl-sn-glycero-3-phospho-L-serine(out). The enzyme catalyses a 1,2-diacyl-sn-glycero-3-phosphoethanolamine(in) = a 1,2-diacyl-sn-glycero-3-phosphoethanolamine(out). Its function is as follows. Lipid transfer protein required for both autophagosome formation and regulation of lipid droplet morphology and dispersion. Tethers the edge of the isolation membrane (IM) to the endoplasmic reticulum (ER) and mediates direct lipid transfer from ER to IM for IM expansion. Binds to the ER exit site (ERES), which is the membrane source for autophagosome formation, and extracts phospholipids from the membrane source and transfers them to ATG9 (ATG9A or ATG9B) to the IM for membrane expansion. Lipid transfer activity is enhanced by WDR45/WIPI4, which promotes ATG2B-association with phosphatidylinositol 3-monophosphate (PI3P)-containing membranes. This chain is Autophagy-related protein 2 homolog B, found in Mus musculus (Mouse).